Reading from the N-terminus, the 382-residue chain is 4-hydroxy-3-methylbut-2-en-1-yl diphosphate synthase (flavodoxin) (382 aa).

[4Fe-4S] cluster is bound by residues Cys273, Cys276, Cys308, and Glu315.

It belongs to the IspG family. [4Fe-4S] cluster is required as a cofactor.

It catalyses the reaction (2E)-4-hydroxy-3-methylbut-2-enyl diphosphate + oxidized [flavodoxin] + H2O + 2 H(+) = 2-C-methyl-D-erythritol 2,4-cyclic diphosphate + reduced [flavodoxin]. It participates in isoprenoid biosynthesis; isopentenyl diphosphate biosynthesis via DXP pathway; isopentenyl diphosphate from 1-deoxy-D-xylulose 5-phosphate: step 5/6. In terms of biological role, converts 2C-methyl-D-erythritol 2,4-cyclodiphosphate (ME-2,4cPP) into 1-hydroxy-2-methyl-2-(E)-butenyl 4-diphosphate. The sequence is that of 4-hydroxy-3-methylbut-2-en-1-yl diphosphate synthase (flavodoxin) from Gluconacetobacter diazotrophicus (strain ATCC 49037 / DSM 5601 / CCUG 37298 / CIP 103539 / LMG 7603 / PAl5).